Consider the following 151-residue polypeptide: Neuroglobin (151 aa).

Residues 1–149 (MERPEPELIR…VVQAMSRGWD (149 aa)) form the Globin domain. Cys46 and Cys55 are oxidised to a cystine. Heme b is bound by residues His64 and His96.

This sequence belongs to the globin family. As to quaternary structure, monomer. Homodimer and homotetramer; disulfide-linked. Mainly monomeric but also detected as part of homodimers and homotetramers. Interacts with 14-3-3 proteins; regulates the phosphorylation of NGB. Could interact (ferrous form) with G-alpha(i) proteins (GTP-bound form). Phosphorylated during hypoxia by ERK1/ERK2. Phosphorylation regulates the heme pocket hexacoordination preventing the association of His-64 with the heme metal center. Thereby, promotes the access of dioxygen and nitrite to the heme and stimulates the nitrite reductase activity. Phosphorylation during hypoxia is stabilized by 14-3-3 proteins. Post-translationally, an intramolecular Cys-46/Cys-55 disulfide bond, not necessarily present in orthologs, regulates the heme pocket hexacoordination preventing the association of His-64 with the heme metal center. Thereby, promotes the access of dioxygen and nitrite to the heme and stimulates the nitrite reductase activity. As to expression, predominantly expressed in brain, the strongest expression is seen in the frontal lobe, the subthalamic nucleus and the thalamus.

The protein resides in the cytoplasm. The protein localises to the cytosol. Its subcellular location is the mitochondrion matrix. It catalyses the reaction Fe(III)-heme b-[protein] + nitric oxide + H2O = Fe(II)-heme b-[protein] + nitrite + 2 H(+). Functionally, monomeric globin with a bis-histidyl six-coordinate heme-iron atom through which it can bind dioxygen, carbon monoxide and nitric oxide. Could help transport oxygen and increase its availability to the metabolically active neuronal tissues, though its low quantity in tissues as well as its high affinity for dioxygen, which may limit its oxygen-releasing ability, argue against it. The ferrous/deoxygenated form exhibits a nitrite reductase activity and it could produce nitric oxide which in turn inhibits cellular respiration in response to hypoxia. In its ferrous/deoxygenated state, it may also exhibit GDI (Guanine nucleotide Dissociation Inhibitor) activity toward heterotrimeric G-alpha proteins, thereby regulating signal transduction to facilitate neuroprotective responses in the wake of hypoxia and associated oxidative stress. The chain is Neuroglobin from Homo sapiens (Human).